A 473-amino-acid polypeptide reads, in one-letter code: RuvB-like helicase 2 (473 aa).

76-83 serves as a coordination point for ATP; it reads GPPSTGKT.

This sequence belongs to the RuvB family. May form heterododecamers with RVB1. Component of the SWR1 chromatin remodeling complex, the INO80 chromatin remodeling complex, and of the R2TP complex.

It is found in the nucleus. The enzyme catalyses ATP + H2O = ADP + phosphate + H(+). In terms of biological role, DNA helicase which participates in several chromatin remodeling complexes, including the SWR1 and the INO80 complexes. The SWR1 complex mediates the ATP-dependent exchange of histone H2A for the H2A variant HZT1 leading to transcriptional regulation of selected genes by chromatin remodeling. The INO80 complex remodels chromatin by shifting nucleosomes and is involved in DNA repair. Also involved in pre-rRNA processing. This Gibberella zeae (strain ATCC MYA-4620 / CBS 123657 / FGSC 9075 / NRRL 31084 / PH-1) (Wheat head blight fungus) protein is RuvB-like helicase 2 (RVB2).